We begin with the raw amino-acid sequence, 319 residues long: Acetyl-coenzyme A carboxylase carboxyl transferase subunit alpha (319 aa).

Positions 35-296 constitute a CoA carboxyltransferase C-terminal domain; that stretch reads DLEKEIKQLE…KQRLLEQLKE (262 aa).

Belongs to the AccA family. Acetyl-CoA carboxylase is a heterohexamer composed of biotin carboxyl carrier protein (AccB), biotin carboxylase (AccC) and two subunits each of ACCase subunit alpha (AccA) and ACCase subunit beta (AccD).

It localises to the cytoplasm. It carries out the reaction N(6)-carboxybiotinyl-L-lysyl-[protein] + acetyl-CoA = N(6)-biotinyl-L-lysyl-[protein] + malonyl-CoA. It functions in the pathway lipid metabolism; malonyl-CoA biosynthesis; malonyl-CoA from acetyl-CoA: step 1/1. Component of the acetyl coenzyme A carboxylase (ACC) complex. First, biotin carboxylase catalyzes the carboxylation of biotin on its carrier protein (BCCP) and then the CO(2) group is transferred by the carboxyltransferase to acetyl-CoA to form malonyl-CoA. This is Acetyl-coenzyme A carboxylase carboxyl transferase subunit alpha from Aliivibrio fischeri (strain ATCC 700601 / ES114) (Vibrio fischeri).